The sequence spans 159 residues: Trafficking protein particle complex subunit 6A (159 aa).

At Ser-33 the chain carries Phosphoserine.

Belongs to the TRAPP small subunits family. BET3 subfamily. In terms of assembly, part of the multisubunit transport protein particle (TRAPP) complex. Heterodimer with TRAPPC3. The heterodimer TRAPPC3-TRAPPC6A interacts with TRAPPC2L. Interacts with TRAPPC2L. In terms of tissue distribution, ubiquitous, with lowest expression in skeletal muscle and brain and highest in kidney, liver and testis, as well as in cultured melanocytes.

It localises to the golgi apparatus. The protein localises to the cis-Golgi network. It is found in the endoplasmic reticulum. Functionally, may play a role in vesicular transport during the biogenesis of melanosomes. The protein is Trafficking protein particle complex subunit 6A of Mus musculus (Mouse).